Consider the following 585-residue polypeptide: Aspartate--tRNA ligase (585 aa).

Residue Glu-171 participates in L-aspartate binding. Residues 195–198 (QLFK) form an aspartate region. Arg-217 is an L-aspartate binding site. ATP contacts are provided by residues 217–219 (RDE) and Gln-226. An L-aspartate-binding site is contributed by His-448. Residue Glu-482 participates in ATP binding. An L-aspartate-binding site is contributed by Arg-489. An ATP-binding site is contributed by 534–537 (GLDR).

This sequence belongs to the class-II aminoacyl-tRNA synthetase family. Type 1 subfamily. Homodimer.

The protein localises to the cytoplasm. It catalyses the reaction tRNA(Asp) + L-aspartate + ATP = L-aspartyl-tRNA(Asp) + AMP + diphosphate. Catalyzes the attachment of L-aspartate to tRNA(Asp) in a two-step reaction: L-aspartate is first activated by ATP to form Asp-AMP and then transferred to the acceptor end of tRNA(Asp). In Histophilus somni (strain 129Pt) (Haemophilus somnus), this protein is Aspartate--tRNA ligase.